We begin with the raw amino-acid sequence, 449 residues long: Kynurenine 3-monooxygenase (449 aa).

It belongs to the aromatic-ring hydroxylase family. KMO subfamily. FAD is required as a cofactor.

It carries out the reaction L-kynurenine + NADPH + O2 + H(+) = 3-hydroxy-L-kynurenine + NADP(+) + H2O. It participates in cofactor biosynthesis; NAD(+) biosynthesis; quinolinate from L-kynurenine: step 1/3. Catalyzes the hydroxylation of L-kynurenine (L-Kyn) to form 3-hydroxy-L-kynurenine (L-3OHKyn). Required for synthesis of quinolinic acid. The chain is Kynurenine 3-monooxygenase from Legionella pneumophila (strain Corby).